Reading from the N-terminus, the 226-residue chain is Thiamine-phosphate synthase (226 aa).

Residues 46-50 and Asp-83 each bind 4-amino-2-methyl-5-(diphosphooxymethyl)pyrimidine; that span reads QFRDK. Residues Asp-84 and Asp-103 each coordinate Mg(2+). Ser-122 serves as a coordination point for 4-amino-2-methyl-5-(diphosphooxymethyl)pyrimidine. 2-[(2R,5Z)-2-carboxy-4-methylthiazol-5(2H)-ylidene]ethyl phosphate is bound at residue 149 to 151; that stretch reads TQS. A 4-amino-2-methyl-5-(diphosphooxymethyl)pyrimidine-binding site is contributed by Lys-152. Residues Gly-181 and 201 to 202 each bind 2-[(2R,5Z)-2-carboxy-4-methylthiazol-5(2H)-ylidene]ethyl phosphate; that span reads IT.

The protein belongs to the thiamine-phosphate synthase family. The cofactor is Mg(2+).

The enzyme catalyses 2-[(2R,5Z)-2-carboxy-4-methylthiazol-5(2H)-ylidene]ethyl phosphate + 4-amino-2-methyl-5-(diphosphooxymethyl)pyrimidine + 2 H(+) = thiamine phosphate + CO2 + diphosphate. It catalyses the reaction 2-(2-carboxy-4-methylthiazol-5-yl)ethyl phosphate + 4-amino-2-methyl-5-(diphosphooxymethyl)pyrimidine + 2 H(+) = thiamine phosphate + CO2 + diphosphate. The catalysed reaction is 4-methyl-5-(2-phosphooxyethyl)-thiazole + 4-amino-2-methyl-5-(diphosphooxymethyl)pyrimidine + H(+) = thiamine phosphate + diphosphate. It functions in the pathway cofactor biosynthesis; thiamine diphosphate biosynthesis; thiamine phosphate from 4-amino-2-methyl-5-diphosphomethylpyrimidine and 4-methyl-5-(2-phosphoethyl)-thiazole: step 1/1. In terms of biological role, condenses 4-methyl-5-(beta-hydroxyethyl)thiazole monophosphate (THZ-P) and 2-methyl-4-amino-5-hydroxymethyl pyrimidine pyrophosphate (HMP-PP) to form thiamine monophosphate (TMP). The polypeptide is Thiamine-phosphate synthase (Haemophilus influenzae (strain PittGG)).